The sequence spans 313 residues: Aspartate carbamoyltransferase catalytic subunit (313 aa).

Residues arginine 59 and threonine 60 each contribute to the carbamoyl phosphate site. Position 87 (lysine 87) interacts with L-aspartate. Arginine 109, histidine 137, and glutamine 140 together coordinate carbamoyl phosphate. Residues arginine 170 and arginine 224 each coordinate L-aspartate. 2 residues coordinate carbamoyl phosphate: glycine 265 and proline 266.

The protein belongs to the aspartate/ornithine carbamoyltransferase superfamily. ATCase family. As to quaternary structure, heterododecamer (2C3:3R2) of six catalytic PyrB chains organized as two trimers (C3), and six regulatory PyrI chains organized as three dimers (R2).

It catalyses the reaction carbamoyl phosphate + L-aspartate = N-carbamoyl-L-aspartate + phosphate + H(+). It functions in the pathway pyrimidine metabolism; UMP biosynthesis via de novo pathway; (S)-dihydroorotate from bicarbonate: step 2/3. In terms of biological role, catalyzes the condensation of carbamoyl phosphate and aspartate to form carbamoyl aspartate and inorganic phosphate, the committed step in the de novo pyrimidine nucleotide biosynthesis pathway. The protein is Aspartate carbamoyltransferase catalytic subunit of Agrobacterium fabrum (strain C58 / ATCC 33970) (Agrobacterium tumefaciens (strain C58)).